Consider the following 268-residue polypeptide: Mitochondrial distribution and morphology protein 12 (268 aa).

In terms of domain architecture, SMP-LTD spans 1-266 (MSIDLEWCKL…FPNFHTIVMA (266 aa)). Residues 66-136 (EDDEEGSDRG…PPPAENPHPN (71 aa)) are disordered. The span at 102–111 (PATNVTSSLD) shows a compositional bias: polar residues. Residues 112-121 (TRSDQPDDQK) show a composition bias toward basic and acidic residues.

The protein belongs to the MDM12 family. Component of the ER-mitochondria encounter structure (ERMES) or MDM complex, composed of MMM1, MDM10, MDM12 and MDM34. An MMM1 homodimer associates with one molecule of MDM12 on each side in a pairwise head-to-tail manner, and the SMP-LTD domains of MMM1 and MDM12 generate a continuous hydrophobic tunnel for phospholipid trafficking.

The protein resides in the mitochondrion outer membrane. It localises to the endoplasmic reticulum membrane. Functionally, component of the ERMES/MDM complex, which serves as a molecular tether to connect the endoplasmic reticulum (ER) and mitochondria. Components of this complex are involved in the control of mitochondrial shape and protein biogenesis, and function in nonvesicular lipid trafficking between the ER and mitochondria. MDM12 is required for the interaction of the ER-resident membrane protein MMM1 and the outer mitochondrial membrane-resident beta-barrel protein MDM10. The MDM12-MMM1 subcomplex functions in the major beta-barrel assembly pathway that is responsible for biogenesis of all mitochondrial outer membrane beta-barrel proteins, and acts in a late step after the SAM complex. The MDM10-MDM12-MMM1 subcomplex further acts in the TOM40-specific pathway after the action of the MDM12-MMM1 complex. Essential for establishing and maintaining the structure of mitochondria and maintenance of mtDNA nucleoids. This Laccaria bicolor (strain S238N-H82 / ATCC MYA-4686) (Bicoloured deceiver) protein is Mitochondrial distribution and morphology protein 12.